We begin with the raw amino-acid sequence, 874 residues long: Alanine--tRNA ligase (874 aa).

Zn(2+) contacts are provided by H562, H566, C664, and H668.

The protein belongs to the class-II aminoacyl-tRNA synthetase family. The cofactor is Zn(2+).

The protein localises to the cytoplasm. The enzyme catalyses tRNA(Ala) + L-alanine + ATP = L-alanyl-tRNA(Ala) + AMP + diphosphate. Functionally, catalyzes the attachment of alanine to tRNA(Ala) in a two-step reaction: alanine is first activated by ATP to form Ala-AMP and then transferred to the acceptor end of tRNA(Ala). Also edits incorrectly charged Ser-tRNA(Ala) and Gly-tRNA(Ala) via its editing domain. This is Alanine--tRNA ligase from Neisseria meningitidis serogroup C (strain 053442).